The chain runs to 825 residues: Protein HIR1 (825 aa).

5 WD repeats span residues 15–54 (QRNY…VFAK), 75–114 (RHTG…VQPL), 132–171 (AHDN…KIKR), 174–213 (VHQS…DLSF), and 227–270 (PLTT…TSVS). The span at 294–304 (HERGEEVDGAS) shows a compositional bias: basic and acidic residues. Residues 294–320 (HERGEEVDGASKDNSAASESSGKRRLK) are disordered. WD repeat units lie at residues 309–351 (AASE…PIFV) and 355–396 (LTSK…KAIP). Over residues 574 to 591 (DEESMDDDAEVADEEDET) the composition is skewed to acidic residues. Positions 574–595 (DEESMDDDAEVADEEDETKNEH) are disordered.

It belongs to the WD repeat HIR1 family.

The protein localises to the nucleus. Its function is as follows. Required for replication-independent chromatin assembly and for the periodic repression of histone gene transcription during the cell cycle. This Eremothecium gossypii (strain ATCC 10895 / CBS 109.51 / FGSC 9923 / NRRL Y-1056) (Yeast) protein is Protein HIR1 (HIR1).